The chain runs to 416 residues: 3-isopropylmalate dehydratase large subunit (416 aa).

Positions 299, 357, and 360 each coordinate [4Fe-4S] cluster.

The protein belongs to the aconitase/IPM isomerase family. LeuC type 2 subfamily. In terms of assembly, heterodimer of LeuC and LeuD. [4Fe-4S] cluster serves as cofactor.

It catalyses the reaction (2R,3S)-3-isopropylmalate = (2S)-2-isopropylmalate. The protein operates within amino-acid biosynthesis; L-leucine biosynthesis; L-leucine from 3-methyl-2-oxobutanoate: step 2/4. In terms of biological role, catalyzes the isomerization between 2-isopropylmalate and 3-isopropylmalate, via the formation of 2-isopropylmaleate. This Saccharolobus solfataricus (strain ATCC 35092 / DSM 1617 / JCM 11322 / P2) (Sulfolobus solfataricus) protein is 3-isopropylmalate dehydratase large subunit.